A 179-amino-acid polypeptide reads, in one-letter code: MPRVVCWHTLKSLNGYKNLSSGAETREGLRSSSPVDLPLRPRKQATAAGQRKLLSLQLLLCACTSVTDLTYWGPAGHGATAPHRSLLAIHLHLVPASSAAMKATGPHNAQTQVNPQGHAPSAEDPTGTWTVSGPCKDHPHPFLSQSNPPTRISSALPLKTDSALEQTPQQLPSLHLSQG.

An N6-acetyllysine modification is found at lysine 43. The disordered stretch occupies residues 100-179; that stretch reads AMKATGPHNA…QLPSLHLSQG (80 aa). 2 stretches are compositionally biased toward polar residues: residues 143 to 153 and 163 to 179; these read LSQSNPPTRIS and ALEQ…LSQG.

In terms of assembly, component of the SSP (stage selector protein) complex, which appears to be a heteromer of TFCP2 and 2 copies of NFE4. Interacts with HDAC1 and PCAF. Isoform 2 interacts with TFCP2. Post-translationally, acetylation at Lys-43 prolongs the protein half-life by preventing ubiquitin-mediated degradation and reduces the interaction between NF-E4 and HDAC1, potentially maximizing the activating ability of the factor at the gamma-promoter. In terms of processing, ubiquitinated; leading to its degradation by the proteasome. Acetylation at Lys-43 prevents ubiquitination. As to expression, specifically expressed in fetal liver, cord blood and bone marrow. Also expressed in the K562 and HEL cell lines, which constitutively express the fetal globin genes.

Its subcellular location is the nucleus. Its function is as follows. Functions as part of the SSP (stage selector protein) complex, a complex that contributes to the preferential expression of the gamma-gene in fetal erythroid cells by facilitating the interaction of the gamma-globin genes with enhancer elements contained in the locus control region (LCR). The complex binds to the stage selector element (SSE) in the proximal gamma-globin promoter. In contrast, isoform 2 acts as a repressor of gamma-globin gene expression by preventing NFE2 and RNA polymerase II recruitment to the promoter. This chain is Transcription factor NF-E4 (NFE4), found in Homo sapiens (Human).